The chain runs to 549 residues: Cytoplasmic trehalase (549 aa).

Substrate is bound by residues R168, 175-176, N212, 221-223, 292-294, and G324; these read WD, RSQ, and RDE. Active-site proton donor/acceptor residues include D326 and E509. E525 provides a ligand contact to substrate.

This sequence belongs to the glycosyl hydrolase 37 family. Monomer.

The protein resides in the cytoplasm. It catalyses the reaction alpha,alpha-trehalose + H2O = alpha-D-glucose + beta-D-glucose. Its pathway is glycan degradation; trehalose degradation; D-glucose from alpha,alpha-trehalose: step 1/1. Functionally, hydrolyzes trehalose to glucose. Could be involved, in cells returning to low osmolarity conditions, in the utilization of the accumulated cytoplasmic trehalose, which was synthesized in response to high osmolarity. The polypeptide is Cytoplasmic trehalase (Salmonella schwarzengrund (strain CVM19633)).